The following is a 213-amino-acid chain: Pyridoxine/pyridoxamine 5'-phosphate oxidase (213 aa).

Residues 57 to 62, 77 to 78, Arg-83, Lys-84, and Gln-106 contribute to the FMN site; these read RIVLLR and FT. Arg-62 contributes to the substrate binding site. Residues Tyr-124, Arg-128, and Ser-132 each contribute to the substrate site. The disordered stretch occupies residues 135-163; that stretch reads GARASDQSRPLPDRKTLQKRVEEEEARYP. 141 to 142 contributes to the FMN binding site; it reads QS. Residues 145 to 163 are compositionally biased toward basic and acidic residues; the sequence is LPDRKTLQKRVEEEEARYP. Trp-186 is a binding site for FMN. 192 to 194 contributes to the substrate binding site; the sequence is RLH. Arg-196 is an FMN binding site.

Belongs to the pyridoxamine 5'-phosphate oxidase family. In terms of assembly, homodimer. FMN serves as cofactor.

The enzyme catalyses pyridoxamine 5'-phosphate + O2 + H2O = pyridoxal 5'-phosphate + H2O2 + NH4(+). It carries out the reaction pyridoxine 5'-phosphate + O2 = pyridoxal 5'-phosphate + H2O2. It participates in cofactor metabolism; pyridoxal 5'-phosphate salvage; pyridoxal 5'-phosphate from pyridoxamine 5'-phosphate: step 1/1. The protein operates within cofactor metabolism; pyridoxal 5'-phosphate salvage; pyridoxal 5'-phosphate from pyridoxine 5'-phosphate: step 1/1. Functionally, catalyzes the oxidation of either pyridoxine 5'-phosphate (PNP) or pyridoxamine 5'-phosphate (PMP) into pyridoxal 5'-phosphate (PLP). The sequence is that of Pyridoxine/pyridoxamine 5'-phosphate oxidase from Granulibacter bethesdensis (strain ATCC BAA-1260 / CGDNIH1).